The sequence spans 734 residues: Diacylglycerol kinase alpha (734 aa).

EF-hand domains are found at residues arginine 109–methionine 144 and glutamate 154–leucine 189. Residues aspartate 122, aspartate 124, asparagine 126, glutamate 133, aspartate 167, aspartate 169, serine 171, serine 173, and glutamate 178 each contribute to the Ca(2+) site. 2 consecutive Phorbol-ester/DAG-type zinc fingers follow at residues glutamine 204–cysteine 252 and serine 268–cysteine 318. Residues serine 371–proline 505 enclose the DAGKc domain. At lysine 483 the chain carries N6-acetyllysine.

The protein belongs to the eukaryotic diacylglycerol kinase family. Monomer.

The protein resides in the cytoplasm. It localises to the cytosol. It carries out the reaction a 1,2-diacyl-sn-glycerol + ATP = a 1,2-diacyl-sn-glycero-3-phosphate + ADP + H(+). The catalysed reaction is a 1-O-alkyl-sn-glycerol + ATP = a 1-O-alkyl-sn-glycero-3-phosphate + ADP + H(+). It catalyses the reaction 1-O-alkyl-2-acyl-sn-glycerol + ATP = 1-O-alkyl-2-acyl-sn-glycero-3-phosphate + ADP + H(+). The enzyme catalyses 1,2-dihexadecanoyl-sn-glycerol + ATP = 1,2-dihexadecanoyl-sn-glycero-3-phosphate + ADP + H(+). It carries out the reaction 1-hexadecanoyl-2-(9Z-octadecenoyl)-sn-glycerol + ATP = 1-hexadecanoyl-2-(9Z-octadecenoyl)-sn-glycero-3-phosphate + ADP + H(+). The catalysed reaction is 2-(9Z-octadecenoyl)-glycerol + ATP = 2-(9Z-octadecenoyl)-sn-glycero-3-phosphate + ADP + H(+). It catalyses the reaction 1,2-di-(9Z-octadecenoyl)-sn-glycerol + ATP = 1,2-di-(9Z-octadecenoyl)-sn-glycero-3-phosphate + ADP + H(+). The enzyme catalyses 1-octadecanoyl-2-(5Z,8Z,11Z,14Z-eicosatetraenoyl)-sn-glycerol + ATP = 1-octadecanoyl-2-(5Z,8Z,11Z,14Z-eicosatetraenoyl)-sn-glycero-3-phosphate + ADP + H(+). It carries out the reaction 1,2-didecanoyl-sn-glycerol + ATP = 1,2-didecanoyl-sn-glycero-3-phosphate + ADP + H(+). The catalysed reaction is 1-O-hexadecyl-2-acetyl-sn-glycerol + ATP = 1-O-hexadecyl-2-acetyl-sn-glycero-3-phosphate + ADP + H(+). It catalyses the reaction 1-O-hexadecyl-2-(5Z,8Z,11Z,14Z-eicosatetraenoyl)-sn-glycerol + ATP = 1-O-hexadecyl-2-(5Z,8Z,11Z,14Z-eicosatetraenoyl)-sn-glycero-3-phosphate + ADP + H(+). The enzyme catalyses 1-O-hexadecyl-2-(9Z-octadecenoyl)-sn-glycerol + ATP = 1-O-hexadecyl-2-(9Z-octadecenoyl)-sn-glycero-3-phosphate + ADP + H(+). It carries out the reaction 1-O-hexadecyl-sn-glycerol + ATP = 1-O-hexadecyl-sn-glycero-3-phosphate + ADP + H(+). It participates in lipid metabolism; glycerolipid metabolism. Stimulated by calcium and phosphatidylserine. Its function is as follows. Diacylglycerol kinase that converts diacylglycerol/DAG into phosphatidic acid/phosphatidate/PA and regulates the respective levels of these two bioactive lipids. Thereby, acts as a central switch between the signaling pathways activated by these second messengers with different cellular targets and opposite effects in numerous biological processes. Also plays an important role in the biosynthesis of complex lipids. Can also phosphorylate 1-alkyl-2-acylglycerol in vitro as efficiently as diacylglycerol provided it contains an arachidonoyl group. Also involved in the production of alkyl-lysophosphatidic acid, another bioactive lipid, through the phosphorylation of 1-alkyl-2-acetyl glycerol. This Bos taurus (Bovine) protein is Diacylglycerol kinase alpha (DGKA).